Reading from the N-terminus, the 441-residue chain is Dolichyl-diphosphooligosaccharide--protein glycosyltransferase 48 kDa subunit (441 aa).

The signal sequence occupies residues 1–28; it reads MATALSGGFSKNALFILSAALMLQAVLG. Residues 29-410 are Lumenal-facing; the sequence is DGKTLVLLDN…TQYERFIPSA (382 aa). Residues 411-431 traverse the membrane as a helical segment; sequence FPYYASAFSMMAGLFVFSVVF. The Cytoplasmic portion of the chain corresponds to 432-441; sequence LHMREKEKSD.

Belongs to the DDOST 48 kDa subunit family. Component of the oligosaccharyltransferase (OST) complex.

It localises to the endoplasmic reticulum membrane. It functions in the pathway protein modification; protein glycosylation. In terms of biological role, subunit of the oligosaccharyl transferase (OST) complex that catalyzes the initial transfer of a defined glycan (Glc(3)Man(9)GlcNAc(2) in eukaryotes) from the lipid carrier dolichol-pyrophosphate to an asparagine residue within an Asn-X-Ser/Thr consensus motif in nascent polypeptide chains, the first step in protein N-glycosylation. N-glycosylation occurs cotranslationally and the complex associates with the Sec61 complex at the channel-forming translocon complex that mediates protein translocation across the endoplasmic reticulum (ER). All subunits are required for a maximal enzyme activity. Required for the assembly of both SST3A- and SS3B-containing OST complexes. The chain is Dolichyl-diphosphooligosaccharide--protein glycosyltransferase 48 kDa subunit from Danio rerio (Zebrafish).